A 178-amino-acid polypeptide reads, in one-letter code: Nuclear transcription factor Y subunit B-2 (178 aa).

A DNA-binding region spans residues 39–45 (LPIANIS). Positions 66 to 77 (LQECVSEFISFV) are subunit association domain (SAD). Residues 131–156 (SSKAGDGSVKKDTIGPHSGASSSSAQ) form a disordered region.

The protein belongs to the NFYB/HAP3 subunit family. Heterotrimeric transcription factor composed of three components, NF-YA, NF-YB and NF-YC. NF-YB and NF-YC must interact and dimerize for NF-YA association and DNA binding. Interacts with NFYC4 and NFYC6. As to expression, ubiquitous.

It localises to the nucleus. Component of the NF-Y/HAP transcription factor complex. The NF-Y complex stimulates the transcription of various genes by recognizing and binding to a CCAAT motif in promoters. May regulate the expression of photosynthetic genes, and may be involved in chloroplast and amyloplast development. The protein is Nuclear transcription factor Y subunit B-2 (NFYB2) of Oryza sativa subsp. japonica (Rice).